Consider the following 318-residue polypeptide: Cytochrome f (318 aa).

The signal sequence occupies residues 1 to 34 (MKNNYLANLIKTLQAIVVSVALLAPLVLPSAVNA). The heme site is built by phenylalanine 35, cysteine 55, cysteine 58, and histidine 59. The helical transmembrane segment at 284–304 (VKGLIAFFFTVILAQILLVLK) threads the bilayer.

Belongs to the cytochrome f family. The 4 large subunits of the cytochrome b6-f complex are cytochrome b6, subunit IV (17 kDa polypeptide, petD), cytochrome f and the Rieske protein, while the 4 small subunits are PetG, PetL, PetM and PetN. The complex functions as a dimer. It depends on heme as a cofactor.

Its subcellular location is the plastid. The protein resides in the chloroplast thylakoid membrane. Component of the cytochrome b6-f complex, which mediates electron transfer between photosystem II (PSII) and photosystem I (PSI), cyclic electron flow around PSI, and state transitions. The protein is Cytochrome f of Rhodomonas salina (Cryptomonas salina).